The sequence spans 814 residues: Phenylalanine--tRNA ligase beta subunit (814 aa).

The region spanning 39–153 is the tRNA-binding domain; it reads SKNVNGVVLG…LKHELGTPVS (115 aa). The region spanning 414-500 is the B5 domain; that stretch reads NEDIFIKLRR…RLIGYDRFDL (87 aa). The Mg(2+) site is built by D478, D484, E487, and E488. The FDX-ACB domain maps to 720-813; the sequence is PIVPKIERDI…IEKSFQTKLR (94 aa).

This sequence belongs to the phenylalanyl-tRNA synthetase beta subunit family. Type 1 subfamily. In terms of assembly, tetramer of two alpha and two beta subunits. Requires Mg(2+) as cofactor.

It is found in the cytoplasm. It catalyses the reaction tRNA(Phe) + L-phenylalanine + ATP = L-phenylalanyl-tRNA(Phe) + AMP + diphosphate + H(+). The polypeptide is Phenylalanine--tRNA ligase beta subunit (Prochlorococcus marinus (strain MIT 9312)).